Consider the following 64-residue polypeptide: MARYRHSRSRSRSRYRRRRRRRSRYRGRRRRYRRSRRRRRSRRGRRGYYRRRRYSRRRRRRYYY.

The segment at 1-64 (MARYRHSRSR…SRRRRRRYYY (64 aa)) is disordered.

Belongs to the protamine P1 family. As to expression, testis.

It localises to the nucleus. The protein localises to the chromosome. Protamines substitute for histones in the chromatin of sperm during the haploid phase of spermatogenesis. They compact sperm DNA into a highly condensed, stable and inactive complex. The sequence is that of Sperm protamine P1 (PRM1) from Hypsiprymnodon moschatus (Musky rat kangaroo).